A 462-amino-acid chain; its full sequence is SET domain-containing protein SmydA-8, isoform A (462 aa).

In terms of domain architecture, SET spans 55 to 287 (PNWTISSSTV…KGGEITTTYT (233 aa)).

It belongs to the class V-like SAM-binding methyltransferase superfamily.

The chain is SET domain-containing protein SmydA-8, isoform A from Drosophila melanogaster (Fruit fly).